The sequence spans 72 residues: Protein kish-A (72 aa).

Residues 1-26 form the signal peptide; that stretch reads MSAIFNFQSLLTVILLLICTCAYIRS. Residues 27–53 lie on the Extracellular side of the membrane; sequence LTPSLLDKNKTGFLGIFWKCARIGERK. The N-linked (GlcNAc...) asparagine glycan is linked to Asn35. A helical membrane pass occupies residues 54 to 71; sequence SPYVAFCCIVMALTILFS. A topological domain (cytoplasmic) is located at residue Glu72.

The protein belongs to the KISH family.

The protein resides in the golgi apparatus membrane. Functionally, involved in the early part of the secretory pathway. This Danio rerio (Zebrafish) protein is Protein kish-A (tmem167a).